The primary structure comprises 344 residues: Phenylalanine--tRNA ligase alpha subunit (344 aa).

Glu-256 is a binding site for Mg(2+).

The protein belongs to the class-II aminoacyl-tRNA synthetase family. Phe-tRNA synthetase alpha subunit type 1 subfamily. As to quaternary structure, tetramer of two alpha and two beta subunits. The cofactor is Mg(2+).

It is found in the cytoplasm. It catalyses the reaction tRNA(Phe) + L-phenylalanine + ATP = L-phenylalanyl-tRNA(Phe) + AMP + diphosphate + H(+). The chain is Phenylalanine--tRNA ligase alpha subunit from Bacillus cytotoxicus (strain DSM 22905 / CIP 110041 / 391-98 / NVH 391-98).